The chain runs to 416 residues: Gamma-glutamyl phosphate reductase (416 aa).

Belongs to the gamma-glutamyl phosphate reductase family.

The protein localises to the cytoplasm. The catalysed reaction is L-glutamate 5-semialdehyde + phosphate + NADP(+) = L-glutamyl 5-phosphate + NADPH + H(+). It participates in amino-acid biosynthesis; L-proline biosynthesis; L-glutamate 5-semialdehyde from L-glutamate: step 2/2. In terms of biological role, catalyzes the NADPH-dependent reduction of L-glutamate 5-phosphate into L-glutamate 5-semialdehyde and phosphate. The product spontaneously undergoes cyclization to form 1-pyrroline-5-carboxylate. The polypeptide is Gamma-glutamyl phosphate reductase (Vibrio vulnificus (strain CMCP6)).